We begin with the raw amino-acid sequence, 138 residues long: ER-derived vesicles protein ERV14 (138 aa).

The Cytoplasmic segment spans residues 2 to 6; that stretch reads GAWLF. Residues 7–27 traverse the membrane as a helical segment; sequence ILAVVVNCINLFGQVHFTILY. Over 28–52 the chain is Extracellular; that stretch reads ADLEADYINPIELCSKVNKLITPEA. Residues 53 to 73 form a helical membrane-spanning segment; that stretch reads ALHGALSLLFLLNGYWFVFLL. The Cytoplasmic portion of the chain corresponds to 74 to 111; it reads NLPVLAYNLNKIYNKVQLLDATEIFRTLGKHKRESFLK. A helical membrane pass occupies residues 112 to 132; it reads LGFHLLMFFFYLYRMIMALIA. Residues 133-138 are Extracellular-facing; sequence ESGDDF.

Belongs to the cornichon family.

Its subcellular location is the endoplasmic reticulum membrane. The protein resides in the golgi apparatus membrane. In terms of biological role, could regulate export of the bud site and axial growth sites selection protein AXL2 and possibly other secretory proteins from the endoplasmic reticulum in COPII-coated vesicles. Seems to be required for axial budding pattern in haploid cells. This is ER-derived vesicles protein ERV14 (ERV14) from Saccharomyces cerevisiae (strain ATCC 204508 / S288c) (Baker's yeast).